We begin with the raw amino-acid sequence, 476 residues long: Cytosolic iron-sulfur assembly component 3 (476 aa).

A2 is modified (N-acetylalanine). Residues C24, C71, C74, C77, C190, and C246 each contribute to the [4Fe-4S] cluster site. The segment at 297–316 (DGLTSSVSAEEPSSHRGGGS) is disordered. [4Fe-4S] cluster-binding residues include C395 and C399.

The protein belongs to the NARF family. As to quaternary structure, external component of the CIA complex. In the CIA complex, interacts directly with CIAO1 and MMS19.

Functionally, component of the cytosolic iron-sulfur protein assembly (CIA) complex, a multiprotein complex that mediates the incorporation of iron-sulfur cluster into extramitochondrial Fe/S proteins. Seems to negatively regulate the level of HIF1A expression, although this effect could be indirect. The chain is Cytosolic iron-sulfur assembly component 3 (Ciao3) from Mus musculus (Mouse).